The chain runs to 463 residues: Digalactosyldiacylglycerol synthase 2, chloroplastic (463 aa).

An N-terminal signal peptide occupies residues Met-1–Ala-22.

This sequence belongs to the glycosyltransferase group 1 family. Glycosyltransferase 4 subfamily. In terms of tissue distribution, high expression in nodules infected cells, and low in nodule and root vascular tissue.

It is found in the plastid. It localises to the chloroplast outer membrane. Its subcellular location is the plastid outer membrane. The catalysed reaction is a 1,2-diacyl-3-O-(beta-D-galactosyl)-sn-glycerol + UDP-alpha-D-galactose = a 1,2-diacyl-3-O-[alpha-D-galactosyl-(1-&gt;6)-beta-D-galactosyl]-sn-glycerol + UDP + H(+). Functionally, involved in the synthesis of diacylglycerol galactolipids that are specifically found in thylakoid and in nodule peribacteroid membranes. Specific for alpha-glycosidic linkages. This chain is Digalactosyldiacylglycerol synthase 2, chloroplastic, found in Lotus japonicus (Lotus corniculatus var. japonicus).